The chain runs to 230 residues: NAD(P)H-quinone oxidoreductase subunit K, chloroplastic (230 aa).

Cysteine 43, cysteine 44, cysteine 108, and cysteine 139 together coordinate [4Fe-4S] cluster.

It belongs to the complex I 20 kDa subunit family. As to quaternary structure, NDH is composed of at least 16 different subunits, 5 of which are encoded in the nucleus. [4Fe-4S] cluster is required as a cofactor.

Its subcellular location is the plastid. The protein localises to the chloroplast thylakoid membrane. It carries out the reaction a plastoquinone + NADH + (n+1) H(+)(in) = a plastoquinol + NAD(+) + n H(+)(out). It catalyses the reaction a plastoquinone + NADPH + (n+1) H(+)(in) = a plastoquinol + NADP(+) + n H(+)(out). Functionally, NDH shuttles electrons from NAD(P)H:plastoquinone, via FMN and iron-sulfur (Fe-S) centers, to quinones in the photosynthetic chain and possibly in a chloroplast respiratory chain. The immediate electron acceptor for the enzyme in this species is believed to be plastoquinone. Couples the redox reaction to proton translocation, and thus conserves the redox energy in a proton gradient. The polypeptide is NAD(P)H-quinone oxidoreductase subunit K, chloroplastic (Lotus japonicus (Lotus corniculatus var. japonicus)).